A 129-amino-acid chain; its full sequence is uncharacterized protein (129 aa).

Belongs to the asfivirus C129R family.

The protein resides in the virion. Its function is as follows. Plays a role in the inhibition of type I interferon signaling pathway. Mechanistically, specifically interacts with 2',3'-cGAMP and cleaves it via its phosphodiesterase activity. In turn, prevents 2',3'-cGAMP interaction with host ER-resident STING1 leading to inhibition of downstream signaling pathway and type I interferon production. This is an uncharacterized protein from African swine fever virus (strain Badajoz 1971 Vero-adapted) (Ba71V).